The following is a 1346-amino-acid chain: Adhesion G protein-coupled receptor A3 (1346 aa).

Residues 1 to 21 (MSVLCVLLLAFVLPLRGSSSA) form the signal peptide. Residues 18 to 45 (SSSAGSTECKTYDERSRSAGKSSPSGAT) form a disordered region. The Extracellular segment spans residues 22–739 (GSTECKTYDE…NVFIFRPLHP (718 aa)). 4 LRR repeats span residues 66–90 (FPNR…SFVG), 91–114 (LSSL…AFYG), 116–138 (FSLK…VFKG), and 139–162 (LTNL…IFDS). Positions 176–223 (LLCDCNLQWLVVWIKEKAIGVKETRCSFPRSLQGQLITTLRAETLTCD) constitute an LRRCT domain. One can recognise an Ig-like domain in the interval 229 to 327 (PSFQMTPSQH…GNNTRTVHIV (99 aa)). C251 and C311 are joined by a disulfide. 3 LRR repeats span residues 503–529 (LQRI…ALEA), 574–600 (TSNL…LFSS), and 611–632 (VYKL…GNSS). The region spanning 563-728 (PERQLSFKCN…AVLMDLNRTG (166 aa)) is the GAIN-B domain. A GPS region spans residues 679–728 (PAFWNFSLQGGQGGWQSDGCRILHQDDNFTTVSCHSLNSYAVLMDLNRTG). A disulfide bond links C698 and C712. Residues 740 to 760 (VIYSTALVLVLCLLSVIVSYI) form a helical membrane-spanning segment. At 761-773 (YHHKSVRISKKCW) the chain is on the cytoplasmic side. A helical transmembrane segment spans residues 774 to 794 (HMLVNLCLHILLTCAVFVGGI). The Extracellular portion of the chain corresponds to 795–804 (NQTYNASVCQ). Residues 805-825 (AMGIVLHYSTLATALWSGVTA) form a helical membrane-spanning segment. Residues 826–854 (RNIYKQVTRKAKRYEELDEPPPPPRPMLR) are Cytoplasmic-facing. The chain crosses the membrane as a helical span at residues 855–875 (FYLIGGGIPIIVCGITAAANI). Residues 876 to 897 (KNYGSQVNAPYCWMAWEPSLGA) are Extracellular-facing. The chain crosses the membrane as a helical span at residues 898 to 918 (FYGPAAFIVFVDCMYFLSILI). The Cytoplasmic portion of the chain corresponds to 919–977 (QLRRHPERRFELKEQSEEQQHLSVTEATEITPVHLESSPTAQPVPMSALENEHTFVSQL). A helical transmembrane segment spans residues 978–998 (MGVAGSLTLYAALWVFGALAI). The Extracellular segment spans residues 999-1005 (SQEHPAD). Residues 1006-1026 (LVFACLFGALALGLGAFLVAH) form a helical membrane-spanning segment. Residues 1027-1346 (HCVNRQDMRR…TGLWKHETTV (320 aa)) lie on the Cytoplasmic side of the membrane. Polar residues predominate over residues 1157–1169 (SVNNNNLPGNANI). 2 disordered regions span residues 1157–1188 (SVNN…RASR) and 1202–1284 (SVEG…DGSE). 2 stretches are compositionally biased toward basic residues: residues 1173-1187 (PGRH…HRAS) and 1212-1226 (NKRH…RNSR). A compositionally biased stretch (low complexity) spans 1238 to 1252 (QSQLQQDSSDAASTS). Positions 1266-1280 (IGNGFGHGISNGGLL) are enriched in gly residues. Residues 1344–1346 (TTV) carry the PDZ-binding motif.

This sequence belongs to the G-protein coupled receptor 2 family. Adhesion G-protein coupled receptor (ADGR) subfamily. In terms of assembly, interacts (via PDZ-binding motif) with disheveled proteins; leading to the localization of dishevelled proteins to specific membrane subdomains. Ubiquitously expressed at very low levels.

It localises to the cell membrane. Orphan receptor that acts as a critical modulator of planar cell polarity during gastrulation. Controls the localization of dishevelled. The chain is Adhesion G protein-coupled receptor A3 (adgra3) from Danio rerio (Zebrafish).